Reading from the N-terminus, the 221-residue chain is 7-cyano-7-deazaguanine synthase (221 aa).

Residue 8–18 (LSGGMDSAAVI) coordinates ATP. Positions 186, 196, 199, and 202 each coordinate Zn(2+).

It belongs to the QueC family. Zn(2+) serves as cofactor.

It catalyses the reaction 7-carboxy-7-deazaguanine + NH4(+) + ATP = 7-cyano-7-deazaguanine + ADP + phosphate + H2O + H(+). The protein operates within purine metabolism; 7-cyano-7-deazaguanine biosynthesis. Its function is as follows. Catalyzes the ATP-dependent conversion of 7-carboxy-7-deazaguanine (CDG) to 7-cyano-7-deazaguanine (preQ(0)). The protein is 7-cyano-7-deazaguanine synthase of Stenotrophomonas maltophilia (strain K279a).